A 338-amino-acid chain; its full sequence is Probable 1-aminocyclopropane-1-carboxylate deaminase (338 aa).

N6-(pyridoxal phosphate)lysine is present on lysine 51. Residue serine 78 is the Nucleophile of the active site.

The protein belongs to the ACC deaminase/D-cysteine desulfhydrase family. Pyridoxal 5'-phosphate is required as a cofactor.

The enzyme catalyses 1-aminocyclopropane-1-carboxylate + H2O = 2-oxobutanoate + NH4(+). Catalyzes a cyclopropane ring-opening reaction, the irreversible conversion of 1-aminocyclopropane-1-carboxylate (ACC) to ammonia and alpha-ketobutyrate. The sequence is that of Probable 1-aminocyclopropane-1-carboxylate deaminase from Schizosaccharomyces pombe (strain 972 / ATCC 24843) (Fission yeast).